The primary structure comprises 400 residues: Acetate kinase (400 aa).

Mg(2+) is bound at residue Asn7. Residue Lys14 coordinates ATP. Substrate is bound at residue Arg92. Asp149 serves as the catalytic Proton donor/acceptor. ATP-binding positions include 209–213 (HLGNG), 283–285 (DAR), and 331–335 (GMGEN). Residue Glu385 participates in Mg(2+) binding.

This sequence belongs to the acetokinase family. As to quaternary structure, homodimer. It depends on Mg(2+) as a cofactor. Mn(2+) is required as a cofactor.

Its subcellular location is the cytoplasm. The enzyme catalyses acetate + ATP = acetyl phosphate + ADP. It functions in the pathway metabolic intermediate biosynthesis; acetyl-CoA biosynthesis; acetyl-CoA from acetate: step 1/2. In terms of biological role, catalyzes the formation of acetyl phosphate from acetate and ATP. Can also catalyze the reverse reaction. The sequence is that of Acetate kinase from Helicobacter acinonychis (strain Sheeba).